A 305-amino-acid chain; its full sequence is Probable cell division protein WhiA (305 aa).

The H-T-H motif DNA-binding region spans 272-305; the sequence is SIQQLADSLTVPITKSGVNHRLRKINKIADELTD.

Belongs to the WhiA family.

Its function is as follows. Involved in cell division and chromosome segregation. The sequence is that of Probable cell division protein WhiA from Streptococcus suis (strain 98HAH33).